The sequence spans 184 residues: Large ribosomal subunit protein uL6 (184 aa).

The protein belongs to the universal ribosomal protein uL6 family. Part of the 50S ribosomal subunit.

This protein binds to the 23S rRNA, and is important in its secondary structure. It is located near the subunit interface in the base of the L7/L12 stalk, and near the tRNA binding site of the peptidyltransferase center. The polypeptide is Large ribosomal subunit protein uL6 (Desulfurococcus amylolyticus (strain DSM 18924 / JCM 16383 / VKM B-2413 / 1221n) (Desulfurococcus kamchatkensis)).